Here is a 303-residue protein sequence, read N- to C-terminus: MNPTTEQVLSPGEIFRQTREALNLSLEDVAKEITLRPSILEQLENNEFIQKSTPAIFVKGYVRSYAKFLRLPDSVWENIVFAETEKNDLGKNARSTRAVNQYSSHNRWIGRLTAIVFMIVIGMTGLWWWQSYQQNTQERDDLVQSYVASTENNQPATALVTTEESNKTVPETAAPVSQPVEITNNLLPEIAQENSVSQPKNDEKSVSEIQSAVENPSISPTLPIAKGDLVIEILTNSSWISVKDNARHVLAQKEYKQGEILTFNGNEFSLIVGAPSNVRITYKGENYPLKVDGRVAKFKLSQP.

This is an uncharacterized protein from Haemophilus influenzae (strain ATCC 51907 / DSM 11121 / KW20 / Rd).